Consider the following 219-residue polypeptide: Glutathione S-transferase-like protein LUC7 (219 aa).

Positions 3 to 84 constitute a GST N-terminal domain; the sequence is PFGRLYSFMP…YLAQSGPYSE (82 aa). The 130-residue stretch at 90 to 219 folds into the GST C-terminal domain; it reads DAATSAKIRQ…NLIDVKRVHE (130 aa).

It belongs to the GST superfamily.

Functionally, glutathione S-transferase-like protein; part of the gene cluster that mediates the biosynthesis of the mycotoxin lucilactaene and the lucilactaene-related compound NG-391 that act as cell cycle inhibitors with potent growth inhibitory activity against malarial parasites, moderate growth inhibitory activity against cancer cells, and no activity against bacteria and fungi. Within the cluster, LUC7 and LUC8 encode proteins which are not commonly involved in the biosynthesis of secondary metabolites and are not essential for lucilactaene biosynthesis. The polypeptide is Glutathione S-transferase-like protein LUC7 (Fusarium sp).